The following is a 311-amino-acid chain: Progestin and adipoQ receptor family member 3 (311 aa).

The interval 1–20 (MHQKLLKSAHYIELGSYQYW) is required for interaction with SREBF2. The Cytoplasmic segment spans residues 1–73 (MHQKLLKSAH…FILSNETVNI (73 aa)). The interval 41-60 (KDNPYITDGYRAYLPSRLCI) is required for interaction with SCAP. The segment at 61 to 71 (KSLFILSNETV) is golgi targeting. Residues 74 to 96 (WSHLLGFFLFFTLGIYDMTSVLP) traverse the membrane as a helical segment. At 97–105 (SASASREDF) the chain is on the lumenal side. A helical transmembrane segment spans residues 106–128 (VICSICLFCFQVCMLCSVGYHLF). Residues 129–140 (SCHRSEKTCRRW) lie on the Cytoplasmic side of the membrane. A helical transmembrane segment spans residues 141–163 (MALDYAGISIGILGCYVSGVFYA). Residues 164–172 (FYCNNYWRQ) are Lumenal-facing. The helical transmembrane segment at 173–195 (VYLITVLAMILAVFFAQIHPNYL) threads the bilayer. Residues 196–201 (TQQWQR) lie on the Cytoplasmic side of the membrane. A helical membrane pass occupies residues 202–224 (LRSIIFCSVSGYGVIPTLHWVWL). Over 225–238 (NGGIGAPIVQDFAP) the chain is Lumenal. A helical transmembrane segment spans residues 239-256 (RVIVMYMIALLAFLFYIS). Residues 257 to 275 (KVPERYFPGQLNYLGSSHQ) are Cytoplasmic-facing. Residues 276–298 (IWHILAVVMLYWWHQSTVYVMQY) form a helical membrane-spanning segment. The interval 299-303 (RHSKP) is golgi targeting. Topologically, residues 299-311 (RHSKPCPDYVSHL) are lumenal.

The protein belongs to the ADIPOR family. Interacts with SCAP and SREBF2; the interactions are direct, increase in low cholesterol conditions and tether SCAP:SREBP complex to the Golgi apparatus. Interaction with SCAP is mutually exclusive with INSIG1. In hepatocytes, interacts with PPARA and HUWE1; the interactions promote PPARA poylubiquitination and HUWE1-mediated degradation. In macrophages, interacts with PPARG and STUB1; the interactions promote PPARG poylubiquitination and STUB1-mediated degradation. Widely expressed in a range of tissues.

Its subcellular location is the golgi apparatus membrane. In terms of biological role, golgi-scaffold protein which modulates its interactors acitivies by anchoring them to the Golgi apparatus. Functions as a spatial regulator of RAF1 kinase by sequestrating it to the Golgi apparatus. Acts as a positive regulator of cholesterol biosynthesis by mediating the anchoring of the SCAP:SREBP complex in the Golgi apparatus, thereby promoting SCAP:SREBF2 complex formation, potentiating SREBF2 and SREBF1 processing and enhancing lipid synthesis. Also regulates PPARA and PPARG functions by mediating their interaction with E3 ubiquitin ligases, such as STUB1 or HUWE1, leading to their polyubiquitination and proteasome-mediated degradation. This chain is Progestin and adipoQ receptor family member 3, found in Homo sapiens (Human).